The primary structure comprises 479 residues: Ribosomal RNA small subunit methyltransferase F (479 aa).

S-adenosyl-L-methionine-binding positions include 125–131, Glu-149, Asp-176, and Asp-194; that span reads AAAPGSK. Residue Cys-247 is the Nucleophile of the active site.

It belongs to the class I-like SAM-binding methyltransferase superfamily. RsmB/NOP family.

The protein localises to the cytoplasm. It catalyses the reaction cytidine(1407) in 16S rRNA + S-adenosyl-L-methionine = 5-methylcytidine(1407) in 16S rRNA + S-adenosyl-L-homocysteine + H(+). In terms of biological role, specifically methylates the cytosine at position 1407 (m5C1407) of 16S rRNA. The protein is Ribosomal RNA small subunit methyltransferase F of Salmonella arizonae (strain ATCC BAA-731 / CDC346-86 / RSK2980).